We begin with the raw amino-acid sequence, 280 residues long: Tryptophan synthase alpha chain (280 aa).

Active-site proton acceptor residues include E50 and D61.

The protein belongs to the TrpA family. In terms of assembly, tetramer of two alpha and two beta chains.

It carries out the reaction (1S,2R)-1-C-(indol-3-yl)glycerol 3-phosphate + L-serine = D-glyceraldehyde 3-phosphate + L-tryptophan + H2O. Its pathway is amino-acid biosynthesis; L-tryptophan biosynthesis; L-tryptophan from chorismate: step 5/5. Its function is as follows. The alpha subunit is responsible for the aldol cleavage of indoleglycerol phosphate to indole and glyceraldehyde 3-phosphate. The polypeptide is Tryptophan synthase alpha chain (Methylorubrum extorquens (strain PA1) (Methylobacterium extorquens)).